Reading from the N-terminus, the 1026-residue chain is RecBCD enzyme subunit RecB (1026 aa).

The UvrD-like helicase ATP-binding domain occupies 1–438; the sequence is MSSFDIFSPT…LILDTNYRST (438 aa). Residues 1-766 are DNA-binding and helicase activity, interacts with RecC; sequence MSSFDIFSPT…LANYANVTKH (766 aa). 21-28 serves as a coordination point for ATP; sequence ASAGTGKT. The tract at residues 815-1026 is nuclease activity, interacts with RecD and RecA; that stretch reads SRTIHSFSST…KGNGFLQPGR (212 aa). The Mg(2+) site is built by His854, Asp940, and Asp953. The active-site For nuclease activity is Asp953.

This sequence belongs to the helicase family. UvrD subfamily. In terms of assembly, heterotrimer of RecB, RecC and RecD. All subunits contribute to DNA-binding. Interacts with RecA. The cofactor is Mg(2+).

It carries out the reaction Exonucleolytic cleavage (in the presence of ATP) in either 5'- to 3'- or 3'- to 5'-direction to yield 5'-phosphooligonucleotides.. It catalyses the reaction Couples ATP hydrolysis with the unwinding of duplex DNA by translocating in the 3'-5' direction.. The enzyme catalyses ATP + H2O = ADP + phosphate + H(+). Functionally, a helicase/nuclease that prepares dsDNA breaks (DSB) for recombinational DNA repair. Binds to DSBs and unwinds DNA via a highly rapid and processive ATP-dependent bidirectional helicase activity. Unwinds dsDNA until it encounters a Chi (crossover hotspot instigator) sequence from the 3' direction. Cuts ssDNA a few nucleotides 3' to the Chi site. The properties and activities of the enzyme are changed at Chi. The Chi-altered holoenzyme produces a long 3'-ssDNA overhang and facilitates RecA-binding to the ssDNA for homologous DNA recombination and repair. Holoenzyme degrades any linearized DNA that is unable to undergo homologous recombination. In the holoenzyme this subunit contributes ATPase, 3'-5' helicase, exonuclease activity and loads RecA onto ssDNA. The chain is RecBCD enzyme subunit RecB from Chlamydia trachomatis serovar D (strain ATCC VR-885 / DSM 19411 / UW-3/Cx).